The primary structure comprises 872 residues: Alanine--tRNA ligase (872 aa).

Zn(2+) contacts are provided by His-567, His-571, Cys-669, and His-673.

The protein belongs to the class-II aminoacyl-tRNA synthetase family. Zn(2+) serves as cofactor.

It is found in the cytoplasm. The enzyme catalyses tRNA(Ala) + L-alanine + ATP = L-alanyl-tRNA(Ala) + AMP + diphosphate. In terms of biological role, catalyzes the attachment of alanine to tRNA(Ala) in a two-step reaction: alanine is first activated by ATP to form Ala-AMP and then transferred to the acceptor end of tRNA(Ala). Also edits incorrectly charged Ser-tRNA(Ala) and Gly-tRNA(Ala) via its editing domain. The polypeptide is Alanine--tRNA ligase (Streptococcus pyogenes serotype M4 (strain MGAS10750)).